We begin with the raw amino-acid sequence, 147 residues long: Large ribosomal subunit protein bL9 (147 aa).

The segment at 40-60 is disordered; sequence TTGNLKQHEAHERKAAEEAKQ. The span at 45 to 59 shows a compositional bias: basic and acidic residues; sequence KQHEAHERKAAEEAK.

The protein belongs to the bacterial ribosomal protein bL9 family.

Binds to the 23S rRNA. The chain is Large ribosomal subunit protein bL9 from Exiguobacterium sibiricum (strain DSM 17290 / CCUG 55495 / CIP 109462 / JCM 13490 / 255-15).